The sequence spans 262 residues: Adenosylcobinamide-GDP ribazoletransferase (262 aa).

7 helical membrane-spanning segments follow: residues 37–57, 58–78, 112–132, 139–159, 183–203, 205–225, and 237–257; these read SMPLAGAAIGALAAGTYALCS, MFSFGTPLFLALFLLWLGIWL, VGAFAVLSLACLLSFRWLFLY, IPPALFVAIPLLSRSGAAWLL, AVWALVLAFLALSLLLVFGGV, VWTSAALAVAMALLALGAKPW, and VLGALIEGGETLLWGVVWLLH.

This sequence belongs to the CobS family. The cofactor is Mg(2+).

Its subcellular location is the cell membrane. It catalyses the reaction alpha-ribazole + adenosylcob(III)inamide-GDP = adenosylcob(III)alamin + GMP + H(+). The enzyme catalyses alpha-ribazole 5'-phosphate + adenosylcob(III)inamide-GDP = adenosylcob(III)alamin 5'-phosphate + GMP + H(+). It functions in the pathway cofactor biosynthesis; adenosylcobalamin biosynthesis; adenosylcobalamin from cob(II)yrinate a,c-diamide: step 7/7. In terms of biological role, joins adenosylcobinamide-GDP and alpha-ribazole to generate adenosylcobalamin (Ado-cobalamin). Also synthesizes adenosylcobalamin 5'-phosphate from adenosylcobinamide-GDP and alpha-ribazole 5'-phosphate. In Geobacillus thermodenitrificans (strain NG80-2), this protein is Adenosylcobinamide-GDP ribazoletransferase.